A 271-amino-acid chain; its full sequence is Small ribosomal subunit protein uS2 (271 aa).

The tract at residues 223 to 271 (RALAGSEEGEATEEVTPASEAEKQEVLAEAMSEEGDALQESEVVEEEEK) is disordered. The segment covering 253-271 (MSEEGDALQESEVVEEEEK) has biased composition (acidic residues).

This sequence belongs to the universal ribosomal protein uS2 family.

The polypeptide is Small ribosomal subunit protein uS2 (Wolinella succinogenes (strain ATCC 29543 / DSM 1740 / CCUG 13145 / JCM 31913 / LMG 7466 / NCTC 11488 / FDC 602W) (Vibrio succinogenes)).